The sequence spans 505 residues: Ikaros family zinc finger protein (505 aa).

C2H2-type zinc fingers lie at residues 18-40 (LTCE…KRSH), 46-68 (FQCN…VKLH), 74-96 (FKCS…IRTH), and 102-128 (YKCN…PGFH). 2 stretches are compositionally biased toward polar residues: residues 262–273 (FLNTPSPVTRSA) and 309–327 (RFQH…SQQP). Disordered regions lie at residues 262 to 296 (FLNT…DIGS) and 309 to 440 (RFQH…VSGS). Residues 336 to 345 (ILGGSLGGIC) show a composition bias toward gly residues. Over residues 366-377 (ATSSPSNSCPDS) the composition is skewed to polar residues. A compositionally biased stretch (low complexity) spans 393 to 406 (GSGSSTSRPNGSTG). Residues 409–419 (HRPEMHQDNGR) are compositionally biased toward basic and acidic residues. The segment covering 424–439 (SGASDSSSLPTYNVSG) has biased composition (polar residues). C2H2-type zinc fingers lie at residues 448–470 (YPCH…MGCH) and 476–500 (FECN…RGEH).

The protein belongs to the Ikaros C2H2-type zinc-finger protein family. As to quaternary structure, heterodimer and homodimer with other IKAROS family members. Expression is strongest in the blood, gills and intestine.

The protein localises to the nucleus. The protein is Ikaros family zinc finger protein of Myxine glutinosa (Atlantic hagfish).